We begin with the raw amino-acid sequence, 432 residues long: ATP-dependent RNA helicase RhlB (432 aa).

A Q motif motif is present at residues 9–37 (QNFADLGLQPQVIDGLNAKGFIKCTPIQA). The region spanning 40-219 (LPVLLAGQDI…FEHMQEPEHV (180 aa)) is the Helicase ATP-binding domain. An ATP-binding site is contributed by 53 to 60 (AQTGTGKT). Positions 165–168 (DEAD) match the DEAD box motif. A Helicase C-terminal domain is found at 245–390 (ALLQTLIEEE…QSDYDASALL (146 aa)). Residues 396–432 (PLRLQRRPQQNRRNNNGQRQGGNRKHTRPRQPRNTQS) are disordered. Residues 417–426 (GNRKHTRPRQ) show a composition bias toward basic residues.

It belongs to the DEAD box helicase family. RhlB subfamily. As to quaternary structure, component of the RNA degradosome, which is a multiprotein complex involved in RNA processing and mRNA degradation.

It is found in the cytoplasm. The catalysed reaction is ATP + H2O = ADP + phosphate + H(+). Its function is as follows. DEAD-box RNA helicase involved in RNA degradation. Has RNA-dependent ATPase activity and unwinds double-stranded RNA. This Aliivibrio fischeri (strain ATCC 700601 / ES114) (Vibrio fischeri) protein is ATP-dependent RNA helicase RhlB.